The sequence spans 425 residues: Meiotic recombination protein spo-11 (425 aa).

A disordered region spans residues 1-38 (MYEYSFNPNIDHEPGSVESQQSTIYSDSDDSDDSFLDD). A Topo IIA-type catalytic domain is found at 15–158 (GSVESQQSTI…LNILSCGRGI (144 aa)). A compositionally biased stretch (acidic residues) spans 27-38 (DSDDSDDSFLDD). Tyrosine 119 serves as the catalytic O-(5'-phospho-DNA)-tyrosine intermediate. Positions 202 and 255 each coordinate Mg(2+).

This sequence belongs to the TOP6A family. It depends on Mg(2+) as a cofactor.

It localises to the nucleus. The enzyme catalyses ATP-dependent breakage, passage and rejoining of double-stranded DNA.. Functionally, required for meiotic recombination. Mediates DNA cleavage that forms the double-strand breaks (DSB) that initiate meiotic recombination. The sequence is that of Meiotic recombination protein spo-11 (spo-11) from Caenorhabditis elegans.